A 448-amino-acid chain; its full sequence is Exodeoxyribonuclease 7 large subunit (448 aa).

The protein belongs to the XseA family. Heterooligomer composed of large and small subunits.

The protein localises to the cytoplasm. The enzyme catalyses Exonucleolytic cleavage in either 5'- to 3'- or 3'- to 5'-direction to yield nucleoside 5'-phosphates.. Its function is as follows. Bidirectionally degrades single-stranded DNA into large acid-insoluble oligonucleotides, which are then degraded further into small acid-soluble oligonucleotides. In Nitrosomonas europaea (strain ATCC 19718 / CIP 103999 / KCTC 2705 / NBRC 14298), this protein is Exodeoxyribonuclease 7 large subunit.